We begin with the raw amino-acid sequence, 188 residues long: dITP/XTP pyrophosphatase (188 aa).

7–12 (TGNIGK) is a binding site for substrate. Residues Glu-36 and Asp-65 each contribute to the Mg(2+) site. Asp-65 acts as the Proton acceptor in catalysis. Substrate-binding positions include Ser-66, 141 to 144 (FGYD), Lys-164, and 169 to 170 (HR).

It belongs to the HAM1 NTPase family. As to quaternary structure, homodimer. Mg(2+) is required as a cofactor.

It catalyses the reaction XTP + H2O = XMP + diphosphate + H(+). The catalysed reaction is dITP + H2O = dIMP + diphosphate + H(+). It carries out the reaction ITP + H2O = IMP + diphosphate + H(+). Functionally, pyrophosphatase that catalyzes the hydrolysis of nucleoside triphosphates to their monophosphate derivatives, with a high preference for the non-canonical purine nucleotides XTP (xanthosine triphosphate), dITP (deoxyinosine triphosphate) and ITP. Seems to function as a house-cleaning enzyme that removes non-canonical purine nucleotides from the nucleotide pool, thus preventing their incorporation into DNA/RNA and avoiding chromosomal lesions. This is dITP/XTP pyrophosphatase from Methanopyrus kandleri (strain AV19 / DSM 6324 / JCM 9639 / NBRC 100938).